The chain runs to 371 residues: 4-hydroxyphenylpyruvate dioxygenase-like protein (371 aa).

VOC domains are found at residues 7-135 (RLCH…LLER) and 160-328 (RVDH…VFTK). Fe cation-binding residues include His-163, His-258, and Glu-339.

This sequence belongs to the 4HPPD family. It depends on Fe cation as a cofactor.

The protein resides in the mitochondrion. The enzyme catalyses 3-(4-hydroxyphenyl)pyruvate + O2 = (S)-4-hydroxymandelate + CO2. Its function is as follows. Iron-dependent dioxygenase that catalyzes the conversion of 4-hydroxyphenylpyruvate (4-HPPA) to 4-hydroxymandelate (4-HMA) in the mitochondria, one of the steps in the biosynthesis of coenzyme Q10 from tyrosine. This Homo sapiens (Human) protein is 4-hydroxyphenylpyruvate dioxygenase-like protein.